We begin with the raw amino-acid sequence, 352 residues long: C-C chemokine receptor type 5 (352 aa).

Topologically, residues Met-1–Ala-30 are extracellular. Tyr-3 is subject to Sulfotyrosine. O-linked (GalNAc...) serine glycosylation is found at Ser-6 and Ser-7. Sulfotyrosine is present on residues Tyr-10, Tyr-14, and Tyr-15. Disulfide bonds link Cys-20–Cys-269 and Cys-101–Cys-178. The helical transmembrane segment at Arg-31 to Cys-58 threads the bilayer. Residues Lys-59 to Tyr-68 are Cytoplasmic-facing. The chain crosses the membrane as a helical span at residues Leu-69–Tyr-89. Over Ala-90–Gln-102 the chain is Extracellular. Residues Leu-103–Ile-124 traverse the membrane as a helical segment. Over Asp-125–Thr-141 the chain is Cytoplasmic. The chain crosses the membrane as a helical span at residues Val-142–Phe-166. At Thr-167 to Ile-198 the chain is on the extracellular side. Residues Val-199–Leu-218 traverse the membrane as a helical segment. The Cytoplasmic portion of the chain corresponds to Lys-219 to Arg-235. The chain crosses the membrane as a helical span at residues Leu-236–Phe-260. Over Gln-261 to Gln-277 the chain is Extracellular. A helical transmembrane segment spans residues Ala-278–Gly-301. The Cytoplasmic portion of the chain corresponds to Glu-302–Leu-352. S-palmitoyl cysteine attachment occurs at residues Cys-321, Cys-323, and Cys-324. 4 positions are modified to phosphoserine; by BARK1: Ser-336, Ser-337, Ser-342, and Ser-349.

This sequence belongs to the G-protein coupled receptor 1 family. In terms of assembly, interacts with PRAF2. Efficient ligand binding to CCL3/MIP-1alpha and CCL4/MIP-1beta requires sulfation, O-glycosylation and sialic acid modifications. Glycosylation on Ser-6 is required for efficient binding of CCL4. Interacts with GRK2. Interacts with ARRB1 and ARRB2. Interacts with CNIH4. Interacts with S100A4; this interaction stimulates T-lymphocyte chemotaxis. Post-translationally, sulfated on at least 2 of the N-terminal tyrosines. Sulfation is required for efficient binding of the chemokines, CCL3 and CCL4. In terms of processing, palmitoylation in the C-terminal is important for cell surface expression. Phosphorylation on serine residues in the C-terminal is stimulated by binding CC chemokines especially by APO-RANTES. Post-translationally, O-glycosylated, but not N-glycosylated. Ser-6 appears to be the major site even if Ser-7 may be also O-glycosylated. Also sialylated glycans present which contribute to chemokine binding. Thr-16 and Ser-17 may also be glycosylated and, if so, with small moieties such as a T-antigen.

The protein resides in the cell membrane. In terms of biological role, receptor for a number of inflammatory CC-chemokines including CCL3/MIP-1-alpha, CCL4/MIP-1-beta and RANTES and subsequently transduces a signal by increasing the intracellular calcium ion level. May play a role in the control of granulocytic lineage proliferation or differentiation. Participates in T-lymphocyte migration to the infection site by acting as a chemotactic receptor. This Hylobates moloch (Silvery gibbon) protein is C-C chemokine receptor type 5 (CCR5).